A 153-amino-acid chain; its full sequence is MSITVHIQYAVPKASVPLQADFLRWVKAALVNQSKAGEITIRVASESEAAQLNWRYRHKEGATNILSFPFEVPSCVSLDVPLLGDLVICAPVVAREALEQTKKEQAHWAHLVVHGVLHLLGFDHQQEVEAQQMESLEVTILESLGYPDPYESV.

Residues H114, H118, and H124 each coordinate Zn(2+).

Belongs to the endoribonuclease YbeY family. It depends on Zn(2+) as a cofactor.

It localises to the cytoplasm. Its function is as follows. Single strand-specific metallo-endoribonuclease involved in late-stage 70S ribosome quality control and in maturation of the 3' terminus of the 16S rRNA. The sequence is that of Endoribonuclease YbeY from Nitrosococcus oceani (strain ATCC 19707 / BCRC 17464 / JCM 30415 / NCIMB 11848 / C-107).